A 224-amino-acid polypeptide reads, in one-letter code: Ras-related protein Rab-32C (224 aa).

Residues 1-22 (MYSNKNDKDKDKDQNNENNKNN) are disordered. GTP is bound at residue 35–42 (GKLACGKT). Residues 57 to 65 (YKPTIGVDF) carry the Effector region motif. GTP is bound by residues 83–87 (DIAGQ) and 142–145 (NKCD). The interval 203-224 (GFKLSDQSQSTETTPTQSKTCC) is disordered. The segment covering 209–224 (QSQSTETTPTQSKTCC) has biased composition (low complexity). S-geranylgeranyl cysteine attachment occurs at residues C223 and C224.

It belongs to the small GTPase superfamily. Rab family.

This chain is Ras-related protein Rab-32C (rab32C), found in Dictyostelium discoideum (Social amoeba).